We begin with the raw amino-acid sequence, 770 residues long: tRNA(Met) cytidine acetyltransferase TmcA 2 (770 aa).

The ATP site is built by Gln-209 and Arg-390. In terms of domain architecture, N-acetyltransferase spans 458-608 (MIMLDGIHHK…YPVVVIRPIS (151 aa)). Residue 533-535 (IAV) coordinates acetyl-CoA.

The protein belongs to the TmcA family.

The protein resides in the cytoplasm. The catalysed reaction is cytidine(34) in elongator tRNA(Met) + acetyl-CoA + ATP + H2O = N(4)-acetylcytidine(34) in elongator tRNA(Met) + ADP + phosphate + CoA + H(+). It catalyses the reaction a cytidine in RNA + acetyl-CoA + ATP + H2O = an N(4)-acetylcytidine in RNA + ADP + phosphate + CoA + H(+). The enzyme catalyses a cytidine in tRNA + acetyl-CoA + ATP + H2O = an N(4)-acetylcytidine in tRNA + ADP + phosphate + CoA + H(+). It carries out the reaction a cytidine in mRNA + acetyl-CoA + ATP + H2O = an N(4)-acetylcytidine in mRNA + ADP + phosphate + CoA + H(+). Functionally, catalyzes the formation of N(4)-acetylcytidine (ac(4)C) at the wobble position of tRNA(Met), by using acetyl-CoA as an acetyl donor and ATP (or GTP). In terms of biological role, catalyzes the formation of 41 N(4)-acetylcytidine (ac(4)C) sites in RNA, almost always on the middle C of a CCG motif. Modifications are found mostly in tRNA, with small amounts found in rRNA and mRNA. The sequence is that of tRNA(Met) cytidine acetyltransferase TmcA 2 from Saccharolobus solfataricus (strain ATCC 35092 / DSM 1617 / JCM 11322 / P2) (Sulfolobus solfataricus).